The primary structure comprises 359 residues: UPF0283 membrane protein RL2646 (359 aa).

Residues 1 to 48 (MSKPPSDPPRRAPAAFIYEDEATERRDNGRQGGERRKPESFSEHIVVT) are disordered. Basic and acidic residues predominate over residues 23-42 (TERRDNGRQGGERRKPESFS). 2 helical membrane passes run 77-97 (FGKI…GLWT) and 111-131 (LGYA…ALVI).

The protein belongs to the UPF0283 family.

Its subcellular location is the cell inner membrane. In Rhizobium johnstonii (strain DSM 114642 / LMG 32736 / 3841) (Rhizobium leguminosarum bv. viciae), this protein is UPF0283 membrane protein RL2646.